The following is a 336-amino-acid chain: Holliday junction branch migration complex subunit RuvB (336 aa).

Positions 1–182 (MKERIVNLET…FGMSFRMQFY (182 aa)) are large ATPase domain (RuvB-L). Residues L21, R22, G63, K66, T67, S68, 129-131 (EDF), R172, Y182, and R219 contribute to the ATP site. T67 is a Mg(2+) binding site. A small ATPAse domain (RuvB-S) region spans residues 183–253 (SPSELSLIIK…ITLHALNELG (71 aa)). Residues 256–336 (ELGFDEADLA…IPTLNPQTLF (81 aa)) are head domain (RuvB-H). The DNA site is built by R310 and R315.

It belongs to the RuvB family. In terms of assembly, homohexamer. Forms an RuvA(8)-RuvB(12)-Holliday junction (HJ) complex. HJ DNA is sandwiched between 2 RuvA tetramers; dsDNA enters through RuvA and exits via RuvB. An RuvB hexamer assembles on each DNA strand where it exits the tetramer. Each RuvB hexamer is contacted by two RuvA subunits (via domain III) on 2 adjacent RuvB subunits; this complex drives branch migration. In the full resolvosome a probable DNA-RuvA(4)-RuvB(12)-RuvC(2) complex forms which resolves the HJ.

It is found in the cytoplasm. It carries out the reaction ATP + H2O = ADP + phosphate + H(+). The RuvA-RuvB-RuvC complex processes Holliday junction (HJ) DNA during genetic recombination and DNA repair, while the RuvA-RuvB complex plays an important role in the rescue of blocked DNA replication forks via replication fork reversal (RFR). RuvA specifically binds to HJ cruciform DNA, conferring on it an open structure. The RuvB hexamer acts as an ATP-dependent pump, pulling dsDNA into and through the RuvAB complex. RuvB forms 2 homohexamers on either side of HJ DNA bound by 1 or 2 RuvA tetramers; 4 subunits per hexamer contact DNA at a time. Coordinated motions by a converter formed by DNA-disengaged RuvB subunits stimulates ATP hydrolysis and nucleotide exchange. Immobilization of the converter enables RuvB to convert the ATP-contained energy into a lever motion, pulling 2 nucleotides of DNA out of the RuvA tetramer per ATP hydrolyzed, thus driving DNA branch migration. The RuvB motors rotate together with the DNA substrate, which together with the progressing nucleotide cycle form the mechanistic basis for DNA recombination by continuous HJ branch migration. Branch migration allows RuvC to scan DNA until it finds its consensus sequence, where it cleaves and resolves cruciform DNA. The chain is Holliday junction branch migration complex subunit RuvB from Helicobacter pylori (strain P12).